A 107-amino-acid chain; its full sequence is Cell division protein FtsB (107 aa).

Topologically, residues 1–3 (MGK) are cytoplasmic. A helical membrane pass occupies residues 4 to 21 (LTLLLLILLGWLQYSLWL). Topologically, residues 22–107 (GKNGVHDFVR…IPSTQNNAQQ (86 aa)) are periplasmic. A coiled-coil region spans residues 39–62 (QEVNNGKLKARNDQLFAEIDDLNG).

The protein belongs to the FtsB family. In terms of assembly, part of a complex composed of FtsB, FtsL and FtsQ.

It localises to the cell inner membrane. In terms of biological role, essential cell division protein. May link together the upstream cell division proteins, which are predominantly cytoplasmic, with the downstream cell division proteins, which are predominantly periplasmic. The sequence is that of Cell division protein FtsB from Yersinia enterocolitica serotype O:8 / biotype 1B (strain NCTC 13174 / 8081).